The sequence spans 71 residues: DNA-directed RNA polymerases II, IV and V subunit 10 (71 aa).

Residues Cys-7, Cys-10, Cys-44, and Cys-45 each coordinate Zn(2+).

This sequence belongs to the archaeal Rpo10/eukaryotic RPB10 RNA polymerase subunit family. As to quaternary structure, component of the RNA polymerase II, IV and V complexes. Interacts with NRPD1.

It is found in the nucleus. DNA-dependent RNA polymerase catalyzes the transcription of DNA into RNA using the four ribonucleoside triphosphates as substrates. Component of RNA polymerase II which synthesizes mRNA precursors and many functional non-coding RNAs. Pol II is the central component of the basal RNA polymerase II transcription machinery. It is composed of mobile elements that move relative to each other. Component of RNA polymerases IV and V which mediate short-interfering RNAs (siRNA) accumulation and subsequent RNA-directed DNA methylation-dependent (RdDM) transcriptional gene silencing (TGS) of endogenous repeated sequences, including transposable elements. This Arabidopsis thaliana (Mouse-ear cress) protein is DNA-directed RNA polymerases II, IV and V subunit 10 (NRPB10).